A 132-amino-acid chain; its full sequence is uncharacterized protein (132 aa).

Residues Met-1–Cys-35 form the signal peptide. The interval Ala-91–Leu-132 is disordered. Low complexity predominate over residues Ser-115–Pro-125.

It localises to the secreted. This is an uncharacterized protein from Homo sapiens (Human).